The following is a 161-amino-acid chain: Large ribosomal subunit protein uL15 (161 aa).

Positions 1 to 41 are disordered; sequence MTKLNELAPAPGSTKGRMRVGRGPGSGKGKTAGRGVKGQKA. Residues 22 to 36 show a composition bias toward gly residues; sequence RGPGSGKGKTAGRGV.

This sequence belongs to the universal ribosomal protein uL15 family. Part of the 50S ribosomal subunit.

Its function is as follows. Binds to the 23S rRNA. This Caulobacter sp. (strain K31) protein is Large ribosomal subunit protein uL15.